The chain runs to 857 residues: Catalase-peroxidase (857 aa).

Residues 207-330 (WHSAGTYRVS…LAAVQMGLIY (124 aa)) constitute a cross-link (tryptophyl-tyrosyl-methioninium (Trp-Tyr) (with M-356)). Catalysis depends on histidine 208, which acts as the Proton acceptor. Residues 330–356 (YVNPEGPNGKPDPIAAAKDIRETFGRM) constitute a cross-link (tryptophyl-tyrosyl-methioninium (Tyr-Met) (with W-207)). A heme b-binding site is contributed by histidine 371.

This sequence belongs to the peroxidase family. Peroxidase/catalase subfamily. In terms of assembly, homodimer or homotetramer. Heme b serves as cofactor. In terms of processing, formation of the three residue Trp-Tyr-Met cross-link is important for the catalase, but not the peroxidase activity of the enzyme.

The enzyme catalyses H2O2 + AH2 = A + 2 H2O. It catalyses the reaction 2 H2O2 = O2 + 2 H2O. Its function is as follows. Bifunctional enzyme with both catalase and broad-spectrum peroxidase activity. In Rhodopirellula baltica (strain DSM 10527 / NCIMB 13988 / SH1), this protein is Catalase-peroxidase.